Consider the following 391-residue polypeptide: UPF0229 protein BCA_0588 (391 aa).

Residues 1 to 16 (MGEENQPNYTISQENW) are compositionally biased toward polar residues. 2 disordered regions span residues 1–31 (MGEE…RHQE) and 80–117 (HVGQ…GDAA). Residues 21 to 31 (KGYDDQQRHQE) show a composition bias toward basic and acidic residues. Positions 98 to 115 (GSGGQKQKGPGKGQGAGD) are enriched in gly residues.

The protein belongs to the UPF0229 family.

The protein is UPF0229 protein BCA_0588 of Bacillus cereus (strain 03BB102).